The sequence spans 429 residues: MKKFDKSIAAFEEAQDLMPGGVNSPVRAFKSVGMNPLFMERGKGSKVYDIDGNEYIDYVLSWGPLIHGHANDRVVEALKAVAERGTSFGAPTEIENKLAKLVIERVPSIEIVRMVNSGTEATMSALRLARGYTGRNKILKFIGCYHGHGDSLLIKAGSGVATLGLPDSPGVPEGVAKNTITVAYNDLESVKYAFEQFGDDIACVIVEPVAGNMGVVPPQPGFLEGLREVTEQNGALLIFDEVMTGFRVAYNCGQGYYGVTPDLTCLGKVIGGGLPVGAYGGKAEIMRQVAPSGPIYQAGTLSGNPLAMAAGYETLVQLTPESYVEFERKAEMLEAGLRKAAEKHGIPHHINRAGSMIGIFFTDEPVINYDAAKSSNLEFFAAYYREMVEQGVFLPPSQFEGLFLSTAHSDADIEATIAAAEIAMSKLKA.

Lys268 bears the N6-(pyridoxal phosphate)lysine mark.

The protein belongs to the class-III pyridoxal-phosphate-dependent aminotransferase family. HemL subfamily. In terms of assembly, homodimer. The cofactor is pyridoxal 5'-phosphate.

The protein localises to the cytoplasm. The catalysed reaction is (S)-4-amino-5-oxopentanoate = 5-aminolevulinate. Its pathway is porphyrin-containing compound metabolism; protoporphyrin-IX biosynthesis; 5-aminolevulinate from L-glutamyl-tRNA(Glu): step 2/2. The protein is Glutamate-1-semialdehyde 2,1-aminomutase 2 of Bacillus cereus (strain AH187).